The chain runs to 88 residues: Putative defensin-like protein 256 (88 aa).

Positions 1–25 are cleaved as a signal peptide; that stretch reads MKSSIFFKLLLLVSLLVVIFRQSYA. Disulfide bonds link Cys30–Cys46, Cys36–Cys53, and Cys40–Cys55.

This sequence belongs to the DEFL family.

The protein localises to the secreted. In Arabidopsis thaliana (Mouse-ear cress), this protein is Putative defensin-like protein 256.